We begin with the raw amino-acid sequence, 191 residues long: Pentapeptide repeat protein MfpA (191 aa).

In terms of domain architecture, Pentapeptide repeat spans C115 to G154.

The protein belongs to the pentapeptide repeat protein family. In terms of assembly, homodimer. Probably interacts with DNA gyrase.

When present on multicopy plasmids confers increased resistance to fluoroquinolone antibiotics such as ciprofloxacin and sparfloxacin but not the quinolone nalidixic acid. Forms a structure that exhibits size, shape and electrostatic similarity to B-form DNA; it may bind to DNA gyrase which is postulated to protect it from fluoroquinolones. The sequence is that of Pentapeptide repeat protein MfpA from Mycolicibacterium smegmatis (strain ATCC 700084 / mc(2)155) (Mycobacterium smegmatis).